A 472-amino-acid chain; its full sequence is Exodeoxyribonuclease 7 large subunit (472 aa).

It belongs to the XseA family. Heterooligomer composed of large and small subunits.

Its subcellular location is the cytoplasm. It carries out the reaction Exonucleolytic cleavage in either 5'- to 3'- or 3'- to 5'-direction to yield nucleoside 5'-phosphates.. Bidirectionally degrades single-stranded DNA into large acid-insoluble oligonucleotides, which are then degraded further into small acid-soluble oligonucleotides. This chain is Exodeoxyribonuclease 7 large subunit, found in Carboxydothermus hydrogenoformans (strain ATCC BAA-161 / DSM 6008 / Z-2901).